The primary structure comprises 142 residues: AP-2 complex subunit sigma (142 aa).

It belongs to the adaptor complexes small subunit family. Adaptor protein complex 2 (AP-2) is a heterotetramer composed of two large adaptins (alpha-type and beta-type subunits), a medium adaptin (mu-type subunit AP50) and a small adaptin (sigma-type subunit AP17).

It is found in the cell membrane. The protein resides in the membrane. The protein localises to the coated pit. Functionally, component of the adaptor complexes which link clathrin to receptors in coated vesicles. Clathrin-associated protein complexes are believed to interact with the cytoplasmic tails of membrane proteins, leading to their selection and concentration. This is AP-2 complex subunit sigma (ap2s1) from Dictyostelium discoideum (Social amoeba).